The primary structure comprises 40 residues: Large ribosomal subunit protein bL36A (40 aa).

Belongs to the bacterial ribosomal protein bL36 family.

This chain is Large ribosomal subunit protein bL36A, found in Kineococcus radiotolerans (strain ATCC BAA-149 / DSM 14245 / SRS30216).